The primary structure comprises 827 residues: uncharacterized protein (827 aa).

In terms of domain architecture, PAS 1 spans 12–82 (FDADFEAILN…DMDIGVLSTG (71 aa)). Residues 212 to 264 (LDVEFRLAAAEGGYSWYRSRAATRRAEDGSILRWYGTVEDIDDRRKMFEALKE) form the PAC 1 domain. Residues 265–335 (SEARFRAIAD…RVFYQAFDLR (71 aa)) enclose the PAS 2 domain. Residues 338-390 (VRMEYRLKRAGGGSAWVIDIGQPRFASDGTFLGFVGIALDITERRNAEQERLL) enclose the PAC 2 domain. A GGDEF domain is found at 428–561 (TRLAILCLDL…GGGTIVQYEP (134 aa)). The region spanning 570–820 (RQRMKVSLRH…QAMALLKSRS (251 aa)) is the EAL domain.

This is an uncharacterized protein from Sinorhizobium fredii (strain NBRC 101917 / NGR234).